Reading from the N-terminus, the 191-residue chain is Fe/S biogenesis protein NfuA (191 aa).

Residues cysteine 149 and cysteine 152 each contribute to the [4Fe-4S] cluster site.

It belongs to the NfuA family. Homodimer. [4Fe-4S] cluster serves as cofactor.

Its function is as follows. Involved in iron-sulfur cluster biogenesis. Binds a 4Fe-4S cluster, can transfer this cluster to apoproteins, and thereby intervenes in the maturation of Fe/S proteins. Could also act as a scaffold/chaperone for damaged Fe/S proteins. This chain is Fe/S biogenesis protein NfuA, found in Pseudoalteromonas translucida (strain TAC 125).